The primary structure comprises 183 residues: MNVSFSIAPYFFKERRAKLNSFRKRKVEIVAEIDSLLKNSSSLAIVEYRGLTVNELEQLRKEFKSAGVLSKVYKNRLFKIAAENNGYLDLQTDLVGPNLFAFGTTDAIAPAKIIAKNAKEQPLLILKGGIYDNQVVSAAENALISALPSYTEALTMLASGLQSPLKQLAFGLKLLIDEQKITA.

It belongs to the universal ribosomal protein uL10 family. Part of the ribosomal stalk of the 50S ribosomal subunit. The N-terminus interacts with L11 and the large rRNA to form the base of the stalk. The C-terminus forms an elongated spine to which L12 dimers bind in a sequential fashion forming a multimeric L10(L12)X complex.

In terms of biological role, forms part of the ribosomal stalk, playing a central role in the interaction of the ribosome with GTP-bound translation factors. This chain is Large ribosomal subunit protein uL10, found in Mesomycoplasma hyopneumoniae (strain 232) (Mycoplasma hyopneumoniae).